A 98-amino-acid chain; its full sequence is NADH-ubiquinone oxidoreductase chain 4L (98 aa).

The next 3 membrane-spanning stretches (helical) occupy residues 1-21 (MSLV…GLLM), 29-49 (SLLC…LIIL), and 61-81 (IILL…LVMV).

The protein belongs to the complex I subunit 4L family. In terms of assembly, core subunit of respiratory chain NADH dehydrogenase (Complex I) which is composed of 45 different subunits.

It localises to the mitochondrion inner membrane. The catalysed reaction is a ubiquinone + NADH + 5 H(+)(in) = a ubiquinol + NAD(+) + 4 H(+)(out). Its function is as follows. Core subunit of the mitochondrial membrane respiratory chain NADH dehydrogenase (Complex I) which catalyzes electron transfer from NADH through the respiratory chain, using ubiquinone as an electron acceptor. Part of the enzyme membrane arm which is embedded in the lipid bilayer and involved in proton translocation. The chain is NADH-ubiquinone oxidoreductase chain 4L (MT-ND4L) from Hippopotamus amphibius (Hippopotamus).